Consider the following 74-residue polypeptide: Ubiquitin-like protein FUBI (74 aa).

This sequence belongs to the ubiquitin family.

This Pongo abelii (Sumatran orangutan) protein is Ubiquitin-like protein FUBI (FAU).